Consider the following 231-residue polypeptide: Regulatory factor X-associated protein (231 aa).

The disordered stretch occupies residues 1–163; that stretch reads MEAQAVPEGS…GNVKLEESTD (163 aa). Positions 50-65 are enriched in acidic residues; the sequence is ADAEDEAGDDDADLLD. Residues 115-138 show a composition bias toward basic residues; the sequence is KQRKPWMCKKHRNKMYKDKYKKKK. The Nuclear localization signal motif lies at 123-138; the sequence is KKHRNKMYKDKYKKKK. K157 participates in a covalent cross-link: Glycyl lysine isopeptide (Lys-Gly) (interchain with G-Cter in SUMO2).

As to quaternary structure, RFX consists of at least 3 different subunits; RFXAP, RFX5 and RFX-B/RFXANK; with each subunit representing a separate complementation group. RFX forms cooperative DNA binding complexes with X2BP and CBF/NF-Y. RFX associates with CIITA to form an active transcriptional complex. In terms of processing, phosphorylated.

The protein localises to the nucleus. Its function is as follows. Part of the RFX complex that binds to the X-box of MHC II promoters. This Mus musculus (Mouse) protein is Regulatory factor X-associated protein (Rfxap).